The chain runs to 476 residues: Cysteine--tRNA ligase (476 aa).

A Zn(2+)-binding site is contributed by C31. Positions 33–43 (PTVYNYAHIGN) match the 'HIGH' region motif. Zn(2+)-binding residues include C211, H236, and E240. Positions 269-273 (KMSKS) match the 'KMSKS' region motif. An ATP-binding site is contributed by K272.

This sequence belongs to the class-I aminoacyl-tRNA synthetase family. As to quaternary structure, monomer. Zn(2+) is required as a cofactor.

It localises to the cytoplasm. It carries out the reaction tRNA(Cys) + L-cysteine + ATP = L-cysteinyl-tRNA(Cys) + AMP + diphosphate. The polypeptide is Cysteine--tRNA ligase (Xanthomonas axonopodis pv. citri (strain 306)).